The primary structure comprises 191 residues: Large ribosomal subunit protein bL9 (191 aa).

The tract at residues 150–191 (EAERQAKGESLTSADAIYGVDEDALRPEDFFDPDADRDGDDE) is disordered. Acidic residues predominate over residues 179–191 (FFDPDADRDGDDE).

It belongs to the bacterial ribosomal protein bL9 family.

Functionally, binds to the 23S rRNA. The chain is Large ribosomal subunit protein bL9 from Allorhizobium ampelinum (strain ATCC BAA-846 / DSM 112012 / S4) (Agrobacterium vitis (strain S4)).